A 233-amino-acid chain; its full sequence is Octanoyltransferase (233 aa).

Residues 34 to 214 (GQAPSTVLLL…EFSAREATLI (181 aa)) form the BPL/LPL catalytic domain. Substrate contacts are provided by residues 72-79 (RGGKLTWH), 144-146 (AIG), and 157-159 (GFS). The Acyl-thioester intermediate role is filled by C175.

It belongs to the LipB family.

It is found in the cytoplasm. The catalysed reaction is octanoyl-[ACP] + L-lysyl-[protein] = N(6)-octanoyl-L-lysyl-[protein] + holo-[ACP] + H(+). The protein operates within protein modification; protein lipoylation via endogenous pathway; protein N(6)-(lipoyl)lysine from octanoyl-[acyl-carrier-protein]: step 1/2. Its function is as follows. Catalyzes the transfer of endogenously produced octanoic acid from octanoyl-acyl-carrier-protein onto the lipoyl domains of lipoate-dependent enzymes. Lipoyl-ACP can also act as a substrate although octanoyl-ACP is likely to be the physiological substrate. This is Octanoyltransferase from Renibacterium salmoninarum (strain ATCC 33209 / DSM 20767 / JCM 11484 / NBRC 15589 / NCIMB 2235).